Consider the following 183-residue polypeptide: ATP synthase subunit delta (183 aa).

The protein belongs to the ATPase delta chain family. F-type ATPases have 2 components, F(1) - the catalytic core - and F(0) - the membrane proton channel. F(1) has five subunits: alpha(3), beta(3), gamma(1), delta(1), epsilon(1). F(0) has three main subunits: a(1), b(2) and c(10-14). The alpha and beta chains form an alternating ring which encloses part of the gamma chain. F(1) is attached to F(0) by a central stalk formed by the gamma and epsilon chains, while a peripheral stalk is formed by the delta and b chains.

The protein localises to the cell inner membrane. F(1)F(0) ATP synthase produces ATP from ADP in the presence of a proton or sodium gradient. F-type ATPases consist of two structural domains, F(1) containing the extramembraneous catalytic core and F(0) containing the membrane proton channel, linked together by a central stalk and a peripheral stalk. During catalysis, ATP synthesis in the catalytic domain of F(1) is coupled via a rotary mechanism of the central stalk subunits to proton translocation. Its function is as follows. This protein is part of the stalk that links CF(0) to CF(1). It either transmits conformational changes from CF(0) to CF(1) or is implicated in proton conduction. The sequence is that of ATP synthase subunit delta from Thermotoga neapolitana (strain ATCC 49049 / DSM 4359 / NBRC 107923 / NS-E).